A 238-amino-acid chain; its full sequence is Urease subunit alpha (238 aa).

Positions 1–102 are urease gamma; sequence MKLTPKELDK…LVTVHTPIEA (102 aa). The urease beta stretch occupies residues 103-238; the sequence is NGKLVPGELF…DDNYVKTIKE (136 aa).

It in the N-terminal section; belongs to the urease gamma subunit family. This sequence in the C-terminal section; belongs to the urease beta subunit family. In terms of assembly, heterohexamer of 3 UreA (alpha) and 3 UreB (beta) subunits.

Its subcellular location is the cytoplasm. It carries out the reaction urea + 2 H2O + H(+) = hydrogencarbonate + 2 NH4(+). Its pathway is nitrogen metabolism; urea degradation; CO(2) and NH(3) from urea (urease route): step 1/1. This chain is Urease subunit alpha, found in Helicobacter pylori (strain P12).